Reading from the N-terminus, the 188-residue chain is Large ribosomal subunit protein eL18 (188 aa).

The tract at residues histidine 151–lysine 188 is disordered. 2 stretches are compositionally biased toward basic residues: residues serine 161 to glycine 171 and arginine 178 to lysine 188.

The protein belongs to the eukaryotic ribosomal protein eL18 family.

It localises to the cytoplasm. The protein is Large ribosomal subunit protein eL18 (RpL18) of Lysiphlebus testaceipes (Greenbugs aphid parastoid).